The sequence spans 225 residues: PKHD-type hydroxylase YbiX (225 aa).

The 100-residue stretch at 78-177 (TLSTPLFNRY…RVASFMWIQS (100 aa)) folds into the Fe2OG dioxygenase domain. His-96, Asp-98, and His-158 together coordinate Fe cation. Position 168 (Arg-168) interacts with 2-oxoglutarate.

It depends on Fe(2+) as a cofactor. The cofactor is L-ascorbate.

This is PKHD-type hydroxylase YbiX from Escherichia coli O45:K1 (strain S88 / ExPEC).